The sequence spans 705 residues: Calpain-1 catalytic subunit (705 aa).

A Calpain catalytic domain is found at 48-347; that stretch reads LFRDPQFPAG…FSRLEICNLT (300 aa). Residues cysteine 108, histidine 265, and asparagine 289 contribute to the active site. Residues 348–517 are domain III; the sequence is PDALTKDELS…KQSDTAELDE (170 aa). The linker stretch occupies residues 518–533; that stretch reads EISADLADEEEITEDD. An EF-hand 1 domain is found at 530–565; that stretch reads TEDDIEDGFKNMFQQLAGEDMEISVFELKTILNRVI. The interval 534–704 is domain IV; that stretch reads IEDGFKNMFQ…LAEWLLLTMC (171 aa). Positions 549, 551, 556, 589, 591, 593, 595, 600, 619, 621, 623, 625, and 630 each coordinate Ca(2+). 2 consecutive EF-hand domains span residues 606-641 and 671-705; these read NKIR…AGFK and VKLE…TMCG.

The protein belongs to the peptidase C2 family. Heterodimer of large (catalytic) and a small (regulatory) subunit. Ca(2+) serves as cofactor. The N-terminus is blocked. In terms of tissue distribution, ubiquitously expressed.

Its subcellular location is the cytoplasm. It is found in the cell membrane. It carries out the reaction Broad endopeptidase specificity.. With respect to regulation, activated by micromolar concentrations of calcium and inhibited by calpastatin. Calcium-regulated non-lysosomal thiol-protease which catalyze limited proteolysis of substrates involved in cytoskeletal remodeling and signal transduction. This chain is Calpain-1 catalytic subunit, found in Gallus gallus (Chicken).